A 148-amino-acid polypeptide reads, in one-letter code: MTDLELQQLVATISMHDFHRPFQHRAYFNARLRTTGGRYQLASHDIDINPKMLTDFDEATLIGVIKHELCHYHLHLTKRGYRHRDADFKRLLAQVGGSRYAPAPKQATARPYRYIYECQRCGRRYYRKRRMDTRRYTCGRCQGPIKLV.

The region spanning 6 to 147 (LQQLVATISM…CGRCQGPIKL (142 aa)) is the SprT-like domain. H67 contributes to the Zn(2+) binding site. The active site involves E68. H71 serves as a coordination point for Zn(2+).

Belongs to the SprT family. Requires Zn(2+) as cofactor.

It is found in the cytoplasm. The chain is Protein SprT-like from Lactiplantibacillus plantarum (strain ATCC BAA-793 / NCIMB 8826 / WCFS1) (Lactobacillus plantarum).